Here is a 711-residue protein sequence, read N- to C-terminus: Amino-acid racemase (711 aa).

Topologically, residues 1–14 (MTKNESYSGIDYFR) are cytoplasmic. The chain crosses the membrane as a helical span at residues 15–35 (FIAALLIVAIHTSPLFSFSET). Topologically, residues 36–37 (GN) are extracellular. The chain crosses the membrane as a helical span at residues 38–58 (FIFTRIVAPVAVPFFFMTSGF). At 59–78 (FLISRYTCNAEKLGAFIKKT) the chain is on the cytoplasmic side. Residues 79-99 (TLIYGVAILLYIPINVYNGYF) form a helical membrane-spanning segment. Over 100–117 (KMDNLLPNIIKDIVFDGT) the chain is Extracellular. The chain crosses the membrane as a helical span at residues 118–138 (LYHLWYLPASIIGAAIAWYLV). Over 139-146 (KKVHYRKA) the chain is Cytoplasmic. A helical transmembrane segment spans residues 147–167 (FLIASILYIIGLFGDSYYGIV). The Extracellular portion of the chain corresponds to 168–188 (KSVSCLNVFYNLIFQLTDYTR). The helical transmembrane segment at 189–209 (NGIFFAPIFFVLGGYISDSPN) threads the bilayer. Over 210 to 241 (RYRKKNYIRIYSLFCLMFGKTLTLQHFDIQKH) the chain is Cytoplasmic. A helical transmembrane segment spans residues 242–262 (DSMYVLLLPSVWCLFNLLLHF). At 263–306 (RGKRRTGLRTISLDQLYHSSVYDCCNTIVCAELLHLQSLLVENS) the chain is on the extracellular side. The chain crosses the membrane as a helical span at residues 307–327 (LVHYIAVCFASVVLAVVITAL). Topologically, residues 328 to 711 (LSSLKPKKAK…EHRLNIIRRA (384 aa)) are cytoplasmic. Positions 336–711 (AKHTADTDRA…EHRLNIIRRA (376 aa)) are racemase. K376 acts as the Proton acceptor in catalysis. An N6-(pyridoxal phosphate)lysine modification is found at K376. R470 lines the substrate pocket. Y602 acts as the Proton acceptor in catalysis. Residue M651 participates in substrate binding.

It in the N-terminal section; belongs to the acyltransferase 3 family. This sequence in the C-terminal section; belongs to the alanine racemase family. The cofactor is pyridoxal 5'-phosphate.

Its subcellular location is the cell membrane. This is Amino-acid racemase (vanTG) from Enterococcus faecalis (Streptococcus faecalis).